The following is a 681-amino-acid chain: MLSKEEPACRQFHSREKTWGNEHNGKTVTQANNKEHKVPAVRRGDIGQREPAAHPASHIQGTMASENTGEQATCKDQYMDLDAPGNNLEHSWLHRHCEIPTTLHQRAKKTGRLFSGLFGLNLMFLGGTVVSSVALSNKAVPERDSQSFLCILMLLSSVWALYHLLFIRNQNGAVHHDHHAGAMWLKASLAIFGVCSIILSIFEIGHALLLQNCEILMDIVFFSIEIVFVSVQTVLLWVSCKDCVQMHHSVTRYGIMLTLATDILLWLTAVIDDSLEQDLEILQSNSTQDESNEMAQCQCPTDSMCWGLKQGYVTMFPFNIEYSLICATLLFIMWKNVGRREKLHSDPPRHTFQLRGIIYGPLIGGAALLVGISVFVQYQVEATSGMVSILSYHMYYGYKMIILAPMIVCSVAGIIAHSLREKEKKGQKETGRSDQDWLHMEDVGSENKNTDYSSGQYQSSQGDEKIQGYSLAQFALDNEKEKLEHRQGNTTKKHNTHQGKMKNYTRKLDVTLLFVSAVGQLGISYFSIIATVVTTPWTMLSALNFSNSLLLILQYLSQTMFIIESMRSIHEEEKEKPGHHEESHRRMSVQEMHKAPPSCLDAGHLGLSRRVVKEMAMFLMICNIMCWILGAFGAHPLYMNGLERQLYGSGIWLAILNIGLPLSVFYRMHSVGILLEVYLHA.

The span at 1–25 (MLSKEEPACRQFHSREKTWGNEHNG) shows a compositional bias: basic and acidic residues. The disordered stretch occupies residues 1–26 (MLSKEEPACRQFHSREKTWGNEHNGK). The Cytoplasmic segment spans residues 1–112 (MLSKEEPACR…LHQRAKKTGR (112 aa)). Residues 113–133 (LFSGLFGLNLMFLGGTVVSSV) form a helical membrane-spanning segment. The Extracellular portion of the chain corresponds to 134-143 (ALSNKAVPER). A helical membrane pass occupies residues 144–166 (DSQSFLCILMLLSSVWALYHLLF). The Cytoplasmic portion of the chain corresponds to 167-182 (IRNQNGAVHHDHHAGA). The helical transmembrane segment at 183–204 (MWLKASLAIFGVCSIILSIFEI) threads the bilayer. Residues 205–216 (GHALLLQNCEIL) lie on the Extracellular side of the membrane. The helical transmembrane segment at 217 to 240 (MDIVFFSIEIVFVSVQTVLLWVSC) threads the bilayer. The Cytoplasmic segment spans residues 241–248 (KDCVQMHH). The helical transmembrane segment at 249–271 (SVTRYGIMLTLATDILLWLTAVI) threads the bilayer. Over 272–317 (DDSLEQDLEILQSNSTQDESNEMAQCQCPTDSMCWGLKQGYVTMFP) the chain is Extracellular. The helical transmembrane segment at 318-334 (FNIEYSLICATLLFIMW) threads the bilayer. Residues 335 to 358 (KNVGRREKLHSDPPRHTFQLRGII) lie on the Cytoplasmic side of the membrane. The helical transmembrane segment at 359–378 (YGPLIGGAALLVGISVFVQY) threads the bilayer. Residues 379–392 (QVEATSGMVSILSY) are Extracellular-facing. A helical transmembrane segment spans residues 393–415 (HMYYGYKMIILAPMIVCSVAGII). The Cytoplasmic portion of the chain corresponds to 416–507 (AHSLREKEKK…QGKMKNYTRK (92 aa)). A helical transmembrane segment spans residues 508–529 (LDVTLLFVSAVGQLGISYFSII). Residues 530-540 (ATVVTTPWTML) lie on the Extracellular side of the membrane. The chain crosses the membrane as a helical span at residues 541-563 (SALNFSNSLLLILQYLSQTMFII). At 564–614 (ESMRSIHEEEKEKPGHHEESHRRMSVQEMHKAPPSCLDAGHLGLSRRVVKE) the chain is on the cytoplasmic side. Residues 615–632 (MAMFLMICNIMCWILGAF) form a helical membrane-spanning segment. The Extracellular segment spans residues 633–651 (GAHPLYMNGLERQLYGSGI). A helical transmembrane segment spans residues 652-674 (WLAILNIGLPLSVFYRMHSVGIL). The Cytoplasmic segment spans residues 675–681 (LEVYLHA).

It belongs to the otopetrin family. In terms of assembly, homodimer.

The protein resides in the cell membrane. The enzyme catalyses H(+)(in) = H(+)(out). Its activity is regulated as follows. pH regulates the proton channel activity from both sides of the plasma membrane. Low pH activates the channel from the extracellular side but inactivates the channel on the intracellular side. Zn(2+) and Ca(2+) can partially block the channel. Functionally, proton-selective channel gated by extracellular protons. In Xenopus tropicalis (Western clawed frog), this protein is Proton channel OTOP3 (otop3).